A 563-amino-acid chain; its full sequence is GTPase Obg (563 aa).

The Obg domain maps to 2-168 (SDFVDRVTVH…RDVILELKSI (167 aa)). An OBG-type G domain is found at 169–349 (ADVALVGFPS…LNWALADLVT (181 aa)). GTP-binding positions include 175-182 (GFPSAGKS), 200-204 (FTTLV), 221-224 (DVPG), 301-304 (NKVD), and 330-332 (STA). Mg(2+) contacts are provided by S182 and T202. The OCT domain maps to 383-469 (DEGGNALDFT…DRAVEFDWDP (87 aa)). The segment at 525 to 563 (MMAERKAGHWADPSVDDDRHDETSLFGRGETADDEDVEQ) is disordered.

This sequence belongs to the TRAFAC class OBG-HflX-like GTPase superfamily. OBG GTPase family. In terms of assembly, monomer. Requires Mg(2+) as cofactor.

It is found in the cytoplasm. In terms of biological role, an essential GTPase which binds GTP, GDP and possibly (p)ppGpp with moderate affinity, with high nucleotide exchange rates and a fairly low GTP hydrolysis rate. Plays a role in control of the cell cycle, stress response, ribosome biogenesis and in those bacteria that undergo differentiation, in morphogenesis control. In Bifidobacterium adolescentis (strain ATCC 15703 / DSM 20083 / NCTC 11814 / E194a), this protein is GTPase Obg.